Here is a 236-residue protein sequence, read N- to C-terminus: 2,3,4,5-tetrahydropyridine-2,6-dicarboxylate N-acetyltransferase (236 aa).

Belongs to the transferase hexapeptide repeat family. DapH subfamily.

It catalyses the reaction (S)-2,3,4,5-tetrahydrodipicolinate + acetyl-CoA + H2O = L-2-acetamido-6-oxoheptanedioate + CoA. The protein operates within amino-acid biosynthesis; L-lysine biosynthesis via DAP pathway; LL-2,6-diaminopimelate from (S)-tetrahydrodipicolinate (acetylase route): step 1/3. Functionally, catalyzes the transfer of an acetyl group from acetyl-CoA to tetrahydrodipicolinate. The polypeptide is 2,3,4,5-tetrahydropyridine-2,6-dicarboxylate N-acetyltransferase (Pediococcus pentosaceus (strain ATCC 25745 / CCUG 21536 / LMG 10740 / 183-1w)).